The following is a 523-amino-acid chain: 2-isopropylmalate synthase (523 aa).

Residues 5–267 (VIIFDTTLRD…ETGINAKEIH (263 aa)) form the Pyruvate carboxyltransferase domain. Residues aspartate 14, histidine 202, histidine 204, and asparagine 238 each contribute to the Mn(2+) site. A regulatory domain region spans residues 392 to 523 (QLKQLVVHSD…QQKARSLGGV (132 aa)).

Belongs to the alpha-IPM synthase/homocitrate synthase family. LeuA type 1 subfamily. As to quaternary structure, homodimer. It depends on Mn(2+) as a cofactor.

The protein localises to the cytoplasm. It carries out the reaction 3-methyl-2-oxobutanoate + acetyl-CoA + H2O = (2S)-2-isopropylmalate + CoA + H(+). It participates in amino-acid biosynthesis; L-leucine biosynthesis; L-leucine from 3-methyl-2-oxobutanoate: step 1/4. In terms of biological role, catalyzes the condensation of the acetyl group of acetyl-CoA with 3-methyl-2-oxobutanoate (2-ketoisovalerate) to form 3-carboxy-3-hydroxy-4-methylpentanoate (2-isopropylmalate). This chain is 2-isopropylmalate synthase, found in Shewanella woodyi (strain ATCC 51908 / MS32).